The chain runs to 333 residues: tRNA N6-adenosine threonylcarbamoyltransferase (333 aa).

2 residues coordinate Fe cation: H110 and H114. Residues 133 to 137, D166, G179, D183, and N275 contribute to the substrate site; that span reads IVSGG. D302 is a Fe cation binding site.

Belongs to the KAE1 / TsaD family. Fe(2+) is required as a cofactor.

Its subcellular location is the cytoplasm. The enzyme catalyses L-threonylcarbamoyladenylate + adenosine(37) in tRNA = N(6)-L-threonylcarbamoyladenosine(37) in tRNA + AMP + H(+). Required for the formation of a threonylcarbamoyl group on adenosine at position 37 (t(6)A37) in tRNAs that read codons beginning with adenine. Is involved in the transfer of the threonylcarbamoyl moiety of threonylcarbamoyl-AMP (TC-AMP) to the N6 group of A37, together with TsaE and TsaB. TsaD likely plays a direct catalytic role in this reaction. The sequence is that of tRNA N6-adenosine threonylcarbamoyltransferase from Thermodesulfovibrio yellowstonii (strain ATCC 51303 / DSM 11347 / YP87).